Here is a 475-residue protein sequence, read N- to C-terminus: Gamma-aminobutyric acid receptor subunit gamma-2 (475 aa).

Positions 1–39 (MSSPNIWSTGSSVYSTPVFSQKMTVWILLLLSLYPGFTS) are cleaved as a signal peptide. The Extracellular portion of the chain corresponds to 40–275 (QKSDDDYEDY…FDLSRRMGYF (236 aa)). N-linked (GlcNAc...) asparagine glycosylation is found at Asn-52 and Asn-129. Cys-190 and Cys-204 are joined by a disulfide. An N-linked (GlcNAc...) asparagine glycan is attached at Asn-247. A helical membrane pass occupies residues 276–296 (TIQTYIPCTLIVVLSWVSFWI). The Cytoplasmic segment spans residues 297 to 302 (NKDAVP). Residues 303–322 (ARTSLGITTVLTMTTLSTIA) form a helical membrane-spanning segment. At 323–334 (RKSLPKVSYVTA) the chain is on the extracellular side. A helical transmembrane segment spans residues 335–359 (MDLFVSVCFIFVFSALVEYGTLHYF). Residues 360 to 451 (VSNRKPSKDK…IHIRIAKMDS (92 aa)) lie on the Cytoplasmic side of the membrane. Residues 433–450 (RTGAWRHGRIHIRIAKMD) are interaction with GABARAP. The helical transmembrane segment at 452-472 (YARIFFPTAFCLFNLVYWVSY) threads the bilayer. Topologically, residues 473–475 (LYL) are extracellular.

This sequence belongs to the ligand-gated ion channel (TC 1.A.9) family. Gamma-aminobutyric acid receptor (TC 1.A.9.5) subfamily. GABRG2 sub-subfamily. Heteropentamer, formed by a combination of alpha (GABRA1-6), beta (GABRB1-3), gamma (GABRG1-3), delta (GABRD), epsilon (GABRE), rho (GABRR1-3), pi (GABRP) and theta (GABRQ) chains, each subunit exhibiting distinct physiological and pharmacological properties. Interacts with GABARAP. Interacts with KIF21B. Identified in a complex of 720 kDa composed of LHFPL4, NLGN2, GABRA1, GABRB2, GABRG2 and GABRB3. Interacts with LHFPL4. Interacts with SHISA7; interaction leads to the regulation of GABA(A) receptor trafficking, channel deactivation kinetics and pharmacology. Post-translationally, palmitoylated by ZDHHC3/GODZ; required for the accumulation of GABA(A) receptors at the postsynaptic membrane of inhibitory GABAergic synapses.

It localises to the postsynaptic cell membrane. The protein localises to the cell membrane. The protein resides in the cell projection. Its subcellular location is the dendrite. It is found in the cytoplasmic vesicle membrane. It carries out the reaction chloride(in) = chloride(out). Its activity is regulated as follows. Allosterically activated by benzodiazepines. Activated by pentobarbital. Potentiated by etomidate, propofol, pregnanolone. Inhibited by the antagonist bicuculline. Inhibited by zinc ions. Potentiated by histamine. Gamma subunit of the heteropentameric ligand-gated chloride channel gated by gamma-aminobutyric acid (GABA), a major inhibitory neurotransmitter in the brain. GABA-gated chloride channels, also named GABA(A) receptors (GABAAR), consist of five subunits arranged around a central pore and contain GABA active binding site(s) located at the alpha and beta subunit interface(s). When activated by GABA, GABAARs selectively allow the flow of chloride anions across the cell membrane down their electrochemical gradient. Gamma-2/GABRG2-containing GABAARs are found at both synaptic and extrasynaptic sites. Chloride influx into the postsynaptic neuron following GABAAR opening decreases the neuron ability to generate a new action potential, thereby reducing nerve transmission. GABAARs containing alpha-1 and beta-2 or -3 subunits exhibit synaptogenic activity; the gamma-2 subunit being necessary but not sufficient to induce rapid synaptic contacts formation. Extrasynaptic gamma-2-containing receptors contribute to the tonic GABAergic inhibition. GABAARs function also as histamine receptor where histamine binds at the interface of two neighboring beta subunits and potentiates GABA response in a gamma-2 subunit-controlled manner. This is Gamma-aminobutyric acid receptor subunit gamma-2 from Homo sapiens (Human).